A 257-amino-acid chain; its full sequence is Flap endonuclease Xni (257 aa).

Asp109 is a binding site for Mg(2+). Residues 165 to 255 (LKPEQLADYW…FNLQDIRYEK (91 aa)) enclose the 5'-3' exonuclease domain. K(+) contacts are provided by Leu176, Ala177, Ile187, and Ile190. The interval 189-194 (GIGPKA) is interaction with DNA.

The protein belongs to the Xni family. Mg(2+) serves as cofactor. Requires K(+) as cofactor.

Functionally, has flap endonuclease activity. During DNA replication, flap endonucleases cleave the 5'-overhanging flap structure that is generated by displacement synthesis when DNA polymerase encounters the 5'-end of a downstream Okazaki fragment. This is Flap endonuclease Xni from Aliivibrio salmonicida (strain LFI1238) (Vibrio salmonicida (strain LFI1238)).